Here is a 341-residue protein sequence, read N- to C-terminus: Inositol 2-dehydrogenase (341 aa).

The protein belongs to the Gfo/Idh/MocA family. Homotetramer.

The catalysed reaction is myo-inositol + NAD(+) = scyllo-inosose + NADH + H(+). Functionally, involved in the oxidation of myo-inositol (MI) to 2-keto-myo-inositol (2KMI or 2-inosose). The protein is Inositol 2-dehydrogenase of Acidothermus cellulolyticus (strain ATCC 43068 / DSM 8971 / 11B).